Reading from the N-terminus, the 353-residue chain is Melanin-concentrating hormone receptor 1 (353 aa).

Residues 1 to 31 (MDLEASLLPTGPNTSNTSDGPDNLTSAGSPP) form a disordered region. Residues 1-45 (MDLEASLLPTGPNTSNTSDGPDNLTSAGSPPRSGSVSYINIIMPS) lie on the Extracellular side of the membrane. Over residues 11–31 (GPNTSNTSDGPDNLTSAGSPP) the composition is skewed to polar residues. N13, N16, and N23 each carry an N-linked (GlcNAc...) asparagine glycan. The helical transmembrane segment at 46 to 66 (VFGTICLLGIIGNSMVIFAVV) threads the bilayer. Over 67 to 79 (KKSKLHWCNNVPD) the chain is Cytoplasmic. The helical transmembrane segment at 80–100 (IFIINLSVVDLLFLLGMPFMI) threads the bilayer. At 101–118 (HQLMGNGVWHFGETMCTL) the chain is on the extracellular side. A disulfide bridge links C116 with C194. The chain crosses the membrane as a helical span at residues 119-139 (ITAMDANSQFTSTYILTAMAI). Residues 140 to 161 (DRYLATVHPISSTKFRKPSVAT) lie on the Cytoplasmic side of the membrane. Residues 162-182 (LVICLLWALSFISITPVWLYA) form a helical membrane-spanning segment. Over 183–204 (RLIPFPGGAVGCGIRLPNPDTD) the chain is Extracellular. The helical transmembrane segment at 205-225 (LYWFTLYQFFLAFALPFVVIT) threads the bilayer. Over 226–257 (AAYVRILQRMTSSVAPASQRSIRLRTKRVTRT) the chain is Cytoplasmic. The helical transmembrane segment at 258 to 278 (AIAICLVFFVCWAPYYVLQLT) threads the bilayer. The Extracellular portion of the chain corresponds to 279–294 (QLSISRPTLTFVYLYN). The chain crosses the membrane as a helical span at residues 295–315 (AAISLGYANSCLNPFVYIVLC). The Cytoplasmic portion of the chain corresponds to 316 to 353 (ETFRKRLVLSVKPAAQGQLRAVSNAQTADEERTESKGT).

Belongs to the G-protein coupled receptor 1 family. Interacts with NCDN.

It localises to the cell membrane. In terms of biological role, receptor for melanin-concentrating hormone, coupled to both G proteins that inhibit adenylyl cyclase and G proteins that activate phosphoinositide hydrolysis. The polypeptide is Melanin-concentrating hormone receptor 1 (Macaca mulatta (Rhesus macaque)).